Consider the following 378-residue polypeptide: Putative monoglyceride lipase (378 aa).

The short motif at 97-101 (GHSMG) is the GXSXG element. The Nucleophile role is filled by Ser-99. Residues Asp-219 and His-249 each act as charge relay system in the active site. Residues 276-292 (PSETVKSEQETAVEHPK) show a composition bias toward basic and acidic residues. Positions 276 to 350 (PSETVKSEQE…TSESTTVPET (75 aa)) are disordered. The segment covering 293–305 (PTATTSAPSASPT) has biased composition (low complexity). At Ser-301 the chain carries Phosphoserine. The segment covering 341 to 350 (TSESTTVPET) has biased composition (polar residues).

It belongs to the AB hydrolase superfamily. Monoacylglycerol lipase family.

The protein resides in the lipid droplet. It localises to the cytoplasm. The protein localises to the endoplasmic reticulum. It is found in the mitochondrion outer membrane. The catalysed reaction is Hydrolyzes glycerol monoesters of long-chain fatty acids.. It participates in glycerolipid metabolism; triacylglycerol degradation. Converts monoacylglycerides (MAG) to free fatty acids and glycerol. Has a strong preference for monounsaturated monoglycerides. Required for efficient degradation of MAG, short-lived intermediates of glycerolipid metabolism which may also function as lipid signaling molecules. Controls inactivation of the signaling lipid N-palmitoylethanolamine (PEA). Involved in fatty acid ethyl ester (FAEE) catabolism. FAEEs are non-oxidative metabolites of ethanol that are transiently incorporated into lipid droplets (LDs). Their mobilization by LD-resident FAEE hydrolases facilitates a controlled metabolism of these potentially toxic lipid metabolites. This is Putative monoglyceride lipase (mgl1) from Schizosaccharomyces pombe (strain 972 / ATCC 24843) (Fission yeast).